The primary structure comprises 452 residues: Tol-Pal system protein TolB (452 aa).

A signal peptide spans 1–31 (MCGVRRGMGVLLLFCAVALCAMPFVVRSVWG).

Belongs to the TolB family. The Tol-Pal system is composed of five core proteins: the inner membrane proteins TolA, TolQ and TolR, the periplasmic protein TolB and the outer membrane protein Pal. They form a network linking the inner and outer membranes and the peptidoglycan layer.

It localises to the periplasm. Part of the Tol-Pal system, which plays a role in outer membrane invagination during cell division and is important for maintaining outer membrane integrity. In Syntrophus aciditrophicus (strain SB), this protein is Tol-Pal system protein TolB.